The chain runs to 526 residues: WRKY transcription factor 72A (526 aa).

2 stretches are compositionally biased toward basic and acidic residues: residues 40 to 52 (KERKSIHNEDDNS) and 60 to 76 (LTGDKKDDQLESAKADM). Disordered stretches follow at residues 40–76 (KERKSIHNEDDNSKSSQQKDLTGDKKDDQLESAKADM) and 170–200 (SSTKSSPSNLSPENSLGEVKDDEKGTDQTWP). Residues 62–106 (GDKKDDQLESAKADMEEVMEENQRLKKHLDKIMKDYRNLQMQFHE) are a coiled coil. Residues 170 to 185 (SSTKSSPSNLSPENSL) show a composition bias toward low complexity. A DNA-binding region (WRKY) is located at residues 232–298 (CDTPTMNDGC…YEGTHNHPLP (67 aa)).

This sequence belongs to the WRKY group II-b family. Expressed in roots, trichomes and fruits.

The protein localises to the nucleus. Its function is as follows. Transcription activator involved in the transcriptional regulation of terpene biosynthesis in glandular trichomes. Binds to the promoter of the linalool synthase TPS5 and promotes TPS5 gene transactivation. In association with WRKY72B, contributes to basal defense against root-knot nematodes (RKNs) and potato aphids, as well as Mi-1-mediated gene-for-gene resistance to these pests. Both WRKY72A and WRKY72B are not required for gene-for-gene resistance mediated by Pto, another tomato R gene. In Solanum lycopersicum (Tomato), this protein is WRKY transcription factor 72A.